The primary structure comprises 368 residues: N-acetylneuraminate epimerase (368 aa).

The signal sequence occupies residues 1 to 19 (MNKTIMALAIMMASFAANA). Kelch repeat units follow at residues 40-84 (TVYI…AFID), 86-137 (NLYV…FVHN), 139-173 (KAYVTGGVNQNIFNGYFEDLNEAGKDSTAIDKINA), 174-219 (HYFD…VNKG), 222-265 (TWLI…VAGG), 287-336 (ENYQ…PWNN), and 338-367 (LLIIGGETAGGKAVTDSVLISVKDNKVTVQ). The Proton acceptor role is filled by Glu228.

The protein belongs to the NanM family. As to quaternary structure, homodimer.

Its subcellular location is the periplasm. It carries out the reaction N-acetyl-alpha-neuraminate = N-acetyl-beta-neuraminate. Functionally, converts alpha-N-acetylneuranimic acid (Neu5Ac) to the beta-anomer, accelerating the equilibrium between the alpha- and beta-anomers. Probably facilitates sialidase-negative bacteria to compete successfully for limited amounts of extracellular Neu5Ac, which is likely taken up in the beta-anomer. In addition, the rapid removal of sialic acid from solution might be advantageous to the bacterium to damp down host responses. The sequence is that of N-acetylneuraminate epimerase from Shigella sonnei (strain Ss046).